The sequence spans 278 residues: S-methyl-5'-thioadenosine phosphorylase (278 aa).

Phosphate-binding positions include Ser-13, 55–56 (RH), and 88–89 (TA). Met-190 serves as a coordination point for substrate. Residue Thr-191 participates in phosphate binding. 214-216 (DYD) is a substrate binding site.

The protein belongs to the PNP/MTAP phosphorylase family. MTAP subfamily. In terms of assembly, homotrimer.

It localises to the cytoplasm. Its subcellular location is the nucleus. It carries out the reaction S-methyl-5'-thioadenosine + phosphate = 5-(methylsulfanyl)-alpha-D-ribose 1-phosphate + adenine. It participates in amino-acid biosynthesis; L-methionine biosynthesis via salvage pathway; S-methyl-5-thio-alpha-D-ribose 1-phosphate from S-methyl-5'-thioadenosine (phosphorylase route): step 1/1. Functionally, catalyzes the reversible phosphorylation of S-methyl-5'-thioadenosine (MTA) to adenine and 5-methylthioribose-1-phosphate. Involved in the breakdown of MTA, a major by-product of polyamine biosynthesis. Responsible for the first step in the methionine salvage pathway after MTA has been generated from S-adenosylmethionine. Has broad substrate specificity with 6-aminopurine nucleosides as preferred substrates. The protein is S-methyl-5'-thioadenosine phosphorylase of Anopheles gambiae (African malaria mosquito).